The chain runs to 590 residues: Aspartate--tRNA(Asp/Asn) ligase (590 aa).

Position 173 (E173) interacts with L-aspartate. Residues 197–200 (QIFK) are aspartate. Position 219 (R219) interacts with L-aspartate. ATP contacts are provided by residues 219-221 (RDE) and Q228. H450 is an L-aspartate binding site. E484 serves as a coordination point for ATP. R491 serves as a coordination point for L-aspartate. 536–539 (GLDR) provides a ligand contact to ATP.

The protein belongs to the class-II aminoacyl-tRNA synthetase family. Type 1 subfamily. As to quaternary structure, homodimer.

It localises to the cytoplasm. It catalyses the reaction tRNA(Asx) + L-aspartate + ATP = L-aspartyl-tRNA(Asx) + AMP + diphosphate. In terms of biological role, aspartyl-tRNA synthetase with relaxed tRNA specificity since it is able to aspartylate not only its cognate tRNA(Asp) but also tRNA(Asn). Reaction proceeds in two steps: L-aspartate is first activated by ATP to form Asp-AMP and then transferred to the acceptor end of tRNA(Asp/Asn). The chain is Aspartate--tRNA(Asp/Asn) ligase from Coxiella burnetii (strain RSA 331 / Henzerling II).